Consider the following 699-residue polypeptide: MAQKHPGEGGLCGAHHSGGASLRTLGPSVDPDILSFSGLRDSAGSAPNGTRCLTEHSSPKYTQPPNPAHWSDPSHGPPRGPGPPLAEEDPDQSEASSEESGVDQELSRENETGYQDDGNSSFLSIPSTCNCQGTPGIPEGPYSEGRDSSSSNFCHHCTSPALGEDEELEGEYDEEEPLKFPSDVSRVPSEKKPAPRRQRHRVPAKEDTREGGRRDPRSPGRHRLGRKRSQADKRRGLGLWGAEELCQLGQAGFWWLIELLVLVGEYVETCGHLIYACRQLKGSDLDLLRVWVGVWAGRLRGWAQVMFQFLSQGFCYGAGLFTRFLRLVGALLLLALALLLGCLQLGWRFLVGLSDRLGWRDKATWIFSWLASPTWQRCLILLRESRPWQQLVRIVQWGWLELPWVKQRTNRQANAPVAGGRYCQPEEEVARLLTMAGVPEDELNPFHVLGVEATASDVELKKAYRQLAVMVHPDKNHHPRAEEAFKVLRAAWDIVSNPERRKEYEMKRMAENELSRSVNEFLSKLQEAMNTMMCSRCQGKHRRFEMDREPKSARYCAECNRLHPAEEGDFWAESSMLGLKITYFALMDGKVYDITEWAGCQRVGISPDTHRVPYHISFGSRMPGTSGRQRATPDAPPADLQDFLSRIFQVPPGQMSNGNFFAAPQPGPGATAASKPNSTVPKGEAKPKRRKKVRRPFQR.

A disordered region spans residues 1–230 (MAQKHPGEGG…RHRLGRKRSQ (230 aa)). A compositionally biased stretch (pro residues) spans 75 to 84 (HGPPRGPGPP). Over residues 86-102 (AEEDPDQSEASSEESGV) the composition is skewed to acidic residues. A compositionally biased stretch (polar residues) spans 117-133 (DGNSSFLSIPSTCNCQG). A compositionally biased stretch (acidic residues) spans 163–176 (GEDEELEGEYDEEE). Over residues 203 to 218 (PAKEDTREGGRRDPRS) the composition is skewed to basic and acidic residues. Basic residues predominate over residues 219–228 (PGRHRLGRKR). The next 3 helical transmembrane spans lie at 251–271 (AGFW…ETCG), 301–321 (GWAQ…AGLF), and 327–347 (LVGA…QLGW). The 65-residue stretch at 444–508 (NPFHVLGVEA…ERRKEYEMKR (65 aa)) folds into the J domain. The tract at residues 655–699 (MSNGNFFAAPQPGPGATAASKPNSTVPKGEAKPKRRKKVRRPFQR) is disordered. Low complexity predominate over residues 662–673 (AAPQPGPGATAA). A compositionally biased stretch (basic residues) spans 687-699 (PKRRKKVRRPFQR).

In terms of assembly, interacts with the FxxxFxxxF motif of DRD1 via its C-terminal domain. Interacts with pestivirus nonstructural protein NS2.

The protein resides in the endoplasmic reticulum membrane. Regulates the export of target proteins, such as DRD1, from the endoplasmic reticulum to the cell surface. Promotes cleavage of pestivirus polyprotein. This is DnaJ homolog subfamily C member 14 (DNAJC14) from Bos taurus (Bovine).